We begin with the raw amino-acid sequence, 259 residues long: Ribonuclease HII (259 aa).

The region spanning 69 to 257 (VAVCGVDEVG…VLEESQGLIY (189 aa)) is the RNase H type-2 domain. A divalent metal cation is bound by residues aspartate 75, glutamate 76, and aspartate 167.

This sequence belongs to the RNase HII family. It depends on Mn(2+) as a cofactor. Mg(2+) serves as cofactor.

The protein resides in the cytoplasm. It carries out the reaction Endonucleolytic cleavage to 5'-phosphomonoester.. Functionally, endonuclease that specifically degrades the RNA of RNA-DNA hybrids. The protein is Ribonuclease HII of Shouchella clausii (strain KSM-K16) (Alkalihalobacillus clausii).